Reading from the N-terminus, the 359-residue chain is Guanine nucleotide-binding protein G(q) subunit alpha (359 aa).

Residues cysteine 9 and cysteine 10 are each lipidated (S-palmitoyl cysteine). The region spanning 38 to 359 (RELKLLLLGT…QLNLKEYNLV (322 aa)) is the G-alpha domain. Residues 41–54 (KLLLLGTGESGKST) are G1 motif. Residues serine 50, glycine 51, lysine 52, serine 53, threonine 54, serine 156, leucine 180, arginine 181, and arginine 183 each coordinate GTP. A Mg(2+)-binding site is contributed by serine 53. The tract at residues 178 to 186 (DVLRVRVPT) is G2 motif. A Mg(2+)-binding site is contributed by threonine 186. The tract at residues 201 to 210 (FRMVDVGGQR) is G3 motif. Glutamine 209 carries the 5-glutamyl histamine modification. Residues 270–277 (ILFLNKKD) form a G4 motif region. Asparagine 274, lysine 275, aspartate 277, and alanine 331 together coordinate GTP. The segment at 329–334 (TCATDT) is G5 motif.

The protein belongs to the G-alpha family. G(q) subfamily. G proteins are composed of 3 units; alpha, beta and gamma. The alpha chain contains the guanine nucleotide binding site. Interacts (GDP-bound form) with RIC8A (via C-terminus); promoting GNAQ folding and association with the plasma membrane. Binds NHERF1. Forms a complex with PECAM1 and BDKRB2. Interacts with GAS2L2. Palmitoylated by ZDHHC3 and ZDHHC7. Palmitoylation occurs in the Golgi and participates in the localization of GNAQ to the plasma membrane. Post-translationally, histaminylated at Gln-209 residues by TGM2.

Its subcellular location is the cell membrane. The protein resides in the golgi apparatus. The protein localises to the nucleus. It is found in the nucleus membrane. It carries out the reaction GTP + H2O = GDP + phosphate + H(+). Functionally, guanine nucleotide-binding proteins (G proteins) function as transducers downstream of G protein-coupled receptors (GPCRs) in numerous signaling cascades. The alpha chain contains the guanine nucleotide binding site and alternates between an active, GTP-bound state and an inactive, GDP-bound state. Signaling by an activated GPCR promotes GDP release and GTP binding. The alpha subunit has a low GTPase activity that converts bound GTP to GDP, thereby terminating the signal. Both GDP release and GTP hydrolysis are modulated by numerous regulatory proteins. Signaling is mediated via phospholipase C-beta-dependent inositol lipid hydrolysis for signal propagation: activates phospholipase C-beta: following GPCR activation, GNAQ activates PLC-beta (PLCB1, PLCB2, PLCB3 or PLCB4), leading to production of diacylglycerol (DAG) and inositol 1,4,5-trisphosphate (IP3). Required for platelet activation. Regulates B-cell selection and survival and is required to prevent B-cell-dependent autoimmunity. Regulates chemotaxis of BM-derived neutrophils and dendritic cells (in vitro). Transduces FFAR4 signaling in response to long-chain fatty acids (LCFAs). Together with GNA11, required for heart development. The chain is Guanine nucleotide-binding protein G(q) subunit alpha (GNAQ) from Canis lupus familiaris (Dog).